The chain runs to 161 residues: Nucleotide-binding protein GM21_0633 (161 aa).

The protein belongs to the YajQ family.

Nucleotide-binding protein. The polypeptide is Nucleotide-binding protein GM21_0633 (Geobacter sp. (strain M21)).